Consider the following 243-residue polypeptide: 7-cyano-7-deazaguanine synthase (243 aa).

Phe9–Leu19 provides a ligand contact to ATP. Zn(2+)-binding residues include Cys205, Cys220, Cys223, and Cys226.

This sequence belongs to the QueC family. Zn(2+) is required as a cofactor.

The enzyme catalyses 7-carboxy-7-deazaguanine + NH4(+) + ATP = 7-cyano-7-deazaguanine + ADP + phosphate + H2O + H(+). It functions in the pathway purine metabolism; 7-cyano-7-deazaguanine biosynthesis. Functionally, catalyzes the ATP-dependent conversion of 7-carboxy-7-deazaguanine (CDG) to 7-cyano-7-deazaguanine (preQ(0)). The chain is 7-cyano-7-deazaguanine synthase from Albidiferax ferrireducens (strain ATCC BAA-621 / DSM 15236 / T118) (Rhodoferax ferrireducens).